The following is a 92-amino-acid chain: Large ribosomal subunit protein eL43 (92 aa).

Zn(2+) is bound by residues Cys-39, Cys-42, Cys-57, and Cys-60. The C4-type zinc finger occupies 39–60 (CSFCGKTKMKRRAVGIWHCGSC).

The protein belongs to the eukaryotic ribosomal protein eL43 family. As to quaternary structure, component of the large ribosomal subunit.

Its subcellular location is the cytoplasm. Functionally, component of the large ribosomal subunit. The ribosome is a large ribonucleoprotein complex responsible for the synthesis of proteins in the cell. In Mus musculus (Mouse), this protein is Large ribosomal subunit protein eL43 (Rpl37a).